A 274-amino-acid polypeptide reads, in one-letter code: Large ribosomal subunit protein uL2cz/uL2cy (274 aa).

2 disordered regions span residues 1 to 22 (MAIHLYKTSTPSTRNGAVDSQV) and 225 to 252 (PVDHPHGGGEGRAPIGRKKPVTPWGYPA).

The protein belongs to the universal ribosomal protein uL2 family. In terms of assembly, part of the 50S ribosomal subunit.

It is found in the plastid. The protein localises to the chloroplast. The protein is Large ribosomal subunit protein uL2cz/uL2cy (rpl2-A) of Barbarea verna (Land cress).